Here is a 125-residue protein sequence, read N- to C-terminus: Protein ApaG (125 aa).

The ApaG domain maps to 1 to 125 (MINSPRVCIQ…FRLAVPTLIH (125 aa)).

The protein is Protein ApaG of Escherichia coli (strain SE11).